Here is a 159-residue protein sequence, read N- to C-terminus: MKIKVGFGYDVHQLKEGRPMWLGGIQLEYTKGPDGHSDADVLIHAICDAILGAANMRDIGFHFANTDDRWKGVDSKVLLKEVCRMIREKGWEISNVDASLALEMPKINPHIERMQTALSEAMSIPVEDISIKATTNEKLGYVGREEGVNAYAVALLIKP.

Residues Asp-10 and His-12 each contribute to the a divalent metal cation site. 4-CDP-2-C-methyl-D-erythritol 2-phosphate contacts are provided by residues 10-12 and 36-37; these read DVH and HS. His-44 contacts a divalent metal cation. 4-CDP-2-C-methyl-D-erythritol 2-phosphate is bound by residues 58–60, 63–67, 134–137, and Arg-144; these read DIG, FANTD, and TTNE.

Belongs to the IspF family. As to quaternary structure, homotrimer. A divalent metal cation serves as cofactor.

The catalysed reaction is 4-CDP-2-C-methyl-D-erythritol 2-phosphate = 2-C-methyl-D-erythritol 2,4-cyclic diphosphate + CMP. It functions in the pathway isoprenoid biosynthesis; isopentenyl diphosphate biosynthesis via DXP pathway; isopentenyl diphosphate from 1-deoxy-D-xylulose 5-phosphate: step 4/6. In terms of biological role, involved in the biosynthesis of isopentenyl diphosphate (IPP) and dimethylallyl diphosphate (DMAPP), two major building blocks of isoprenoid compounds. Catalyzes the conversion of 4-diphosphocytidyl-2-C-methyl-D-erythritol 2-phosphate (CDP-ME2P) to 2-C-methyl-D-erythritol 2,4-cyclodiphosphate (ME-CPP) with a corresponding release of cytidine 5-monophosphate (CMP). The polypeptide is 2-C-methyl-D-erythritol 2,4-cyclodiphosphate synthase (Cytophaga hutchinsonii (strain ATCC 33406 / DSM 1761 / CIP 103989 / NBRC 15051 / NCIMB 9469 / D465)).